A 496-amino-acid chain; its full sequence is Probable chlorophyll(ide) b reductase NYC1, chloroplastic (496 aa).

The transit peptide at 1-43 (MTTLTKIQVYPQVLEHRLFFRDPIRVGSRLTCRERSNRVYVHR) directs the protein to the chloroplast. The next 2 helical transmembrane spans lie at 105-125 (YIVT…LSGG) and 132-152 (LVWY…ANMV). Residue 166 to 190 (ITGSTRGLGKALAREFLLSGDRVIV) participates in NAD(+) binding. A coiled-coil region spans residues 195 to 224 (SESVDMTVKELEQNLKEIMSNASESARKKL). Tyr-330 (proton acceptor) is an active-site residue. The helical transmembrane segment at 470–490 (WVSVFSLSVVCAFIILQSTTP) threads the bilayer.

This sequence belongs to the short-chain dehydrogenases/reductases (SDR) family. As to quaternary structure, interacts with NOL to form a complex that acts as a chlorophyll b reductase. Interacts with HCAR, RCCR, SGR1 and the LHCII complex. Part of a SGR1-CCE-LHCII complex, which acts in chlorophyll breakdown.

It localises to the plastid. Its subcellular location is the chloroplast thylakoid membrane. The catalysed reaction is 7(1)-hydroxychlorophyllide a + NAD(+) = chlorophyllide b + NADH + H(+). It catalyses the reaction 7(1)-hydroxychlorophyllide a + NADP(+) = chlorophyllide b + NADPH + H(+). In terms of biological role, involved in chlorophyll b degradation. Belongs to the chlorophyll catabolic enzymes (CCEs). This is Probable chlorophyll(ide) b reductase NYC1, chloroplastic (NYC1) from Arabidopsis thaliana (Mouse-ear cress).